The sequence spans 471 residues: MKKTLYQKLYDSHIVYEEKSQSPILYIDLHLVHEVTSPQAFFSLCSKNRVVRQPKKTFATMDHNVSTIDRNIDSSGLLAKKQMEALIKNCTKFNIKLFDLNHPHQGIVHVIGPEQGITLPGMTIVCGDSHTSTHGAFGALAFGIGTSEVEHVLATQTLKQNRLKSMHIKINGDIDIGITAKDIILFVIKQLGVSRGLGYVIEFSGEIVSKLSMESRMTLCNMSIEMGAKSGIIAPDSVTFSYLCNRKYVPKGKNWNLAIDYWKTLKSDTGAIFDQEFNIDISNLSPQVTWGTNPSQVISINDTIPHLESYSDPIERRSAELSLLYMGLEPGMSLIDVNIQKVFIGSCTNSRIEDLRAVAKIVMNKRVCNSVHAIIVPGSGMVKMQAEKEGLDKIFKNSGFEWRYSGCSMCLAMNDDRLNNKERCASTSNRNFEGRQGRGGRTHLVSPVMAAAAAIFGRFVDVRTIYNSLDK.

[4Fe-4S] cluster contacts are provided by C347, C407, and C410.

This sequence belongs to the aconitase/IPM isomerase family. LeuC type 1 subfamily. As to quaternary structure, heterodimer of LeuC and LeuD. [4Fe-4S] cluster serves as cofactor.

It carries out the reaction (2R,3S)-3-isopropylmalate = (2S)-2-isopropylmalate. The protein operates within amino-acid biosynthesis; L-leucine biosynthesis; L-leucine from 3-methyl-2-oxobutanoate: step 2/4. Its function is as follows. Catalyzes the isomerization between 2-isopropylmalate and 3-isopropylmalate, via the formation of 2-isopropylmaleate. The polypeptide is 3-isopropylmalate dehydratase large subunit (Buchnera aphidicola subsp. Baizongia pistaciae (strain Bp)).